Consider the following 823-residue polypeptide: Leucine--tRNA ligase (823 aa).

A 'HIGH' region motif is present at residues 41 to 51 (PYPSGTLHVGH). The short motif at 580–584 (KMSKS) is the 'KMSKS' region element. Position 583 (K583) interacts with ATP.

Belongs to the class-I aminoacyl-tRNA synthetase family.

It is found in the cytoplasm. It catalyses the reaction tRNA(Leu) + L-leucine + ATP = L-leucyl-tRNA(Leu) + AMP + diphosphate. This is Leucine--tRNA ligase from Thermosipho melanesiensis (strain DSM 12029 / CIP 104789 / BI429).